The following is a 173-amino-acid chain: ATP synthase subunit b (173 aa).

Residues 12 to 32 (LDVNPGLVVWTLVTFLVVVLV) form a helical membrane-spanning segment.

It belongs to the ATPase B chain family. F-type ATPases have 2 components, F(1) - the catalytic core - and F(0) - the membrane proton channel. F(1) has five subunits: alpha(3), beta(3), gamma(1), delta(1), epsilon(1). F(0) has three main subunits: a(1), b(2) and c(10-14). The alpha and beta chains form an alternating ring which encloses part of the gamma chain. F(1) is attached to F(0) by a central stalk formed by the gamma and epsilon chains, while a peripheral stalk is formed by the delta and b chains.

It is found in the cell inner membrane. Functionally, f(1)F(0) ATP synthase produces ATP from ADP in the presence of a proton or sodium gradient. F-type ATPases consist of two structural domains, F(1) containing the extramembraneous catalytic core and F(0) containing the membrane proton channel, linked together by a central stalk and a peripheral stalk. During catalysis, ATP synthesis in the catalytic domain of F(1) is coupled via a rotary mechanism of the central stalk subunits to proton translocation. Component of the F(0) channel, it forms part of the peripheral stalk, linking F(1) to F(0). This Leptospira interrogans serogroup Icterohaemorrhagiae serovar copenhageni (strain Fiocruz L1-130) protein is ATP synthase subunit b.